Consider the following 559-residue polypeptide: DNA primase (559 aa).

The segment at 37–61 (CPFHEERSASFSVNQIKGFYHCFGC) adopts a CHC2-type zinc-finger fold. The Toprim domain occupies 246–327 (KQVIVTEGYL…RGGVILFENN (82 aa)). Residues E252, D296, and D298 each coordinate Mg(2+).

This sequence belongs to the DnaG primase family. In terms of assembly, monomer. The C-terminal domain DnaB-binding domain exists as a dimer in solution. Interacts with DnaB via its C-terminal domain (residues 415-559 of DnaG); up to 3 DnaG fragments bind to a DnaB hexamer. Requires Zn(2+) as cofactor. It depends on Mg(2+) as a cofactor.

It carries out the reaction ssDNA + n NTP = ssDNA/pppN(pN)n-1 hybrid + (n-1) diphosphate.. Functionally, RNA polymerase that catalyzes the synthesis of short RNA molecules used as primers for DNA polymerase during DNA replication. Stimulates the 5'-3' DNA helicase activity of DnaB. The polypeptide is DNA primase (Helicobacter pylori (strain ATCC 700392 / 26695) (Campylobacter pylori)).